Reading from the N-terminus, the 103-residue chain is Large ribosomal subunit protein bL21 (103 aa).

Belongs to the bacterial ribosomal protein bL21 family. Part of the 50S ribosomal subunit. Contacts protein L20.

Functionally, this protein binds to 23S rRNA in the presence of protein L20. The chain is Large ribosomal subunit protein bL21 from Lactobacillus johnsonii (strain CNCM I-12250 / La1 / NCC 533).